We begin with the raw amino-acid sequence, 375 residues long: Protein NDRG3 (375 aa).

Positions 326 to 375 are disordered; the sequence is RSRTHSASSSGSMEIPRSRSHTSNAQLKSSSNNSLSNQIQETPQTIELSC. Residues 348–363 are compositionally biased toward low complexity; that stretch reads SNAQLKSSSNNSLSNQ. A compositionally biased stretch (polar residues) spans 364–375; it reads IQETPQTIELSC.

Belongs to the NDRG family.

This is Protein NDRG3 from Xenopus laevis (African clawed frog).